A 328-amino-acid polypeptide reads, in one-letter code: Malate dehydrogenase (328 aa).

Position 11–17 (11–17) interacts with NAD(+); the sequence is GAAGQIG. Substrate is bound by residues Arg-92 and Arg-98. Residues Asn-105, Gln-112, and 129–131 contribute to the NAD(+) site; that span reads TGN. 2 residues coordinate substrate: Asn-131 and Arg-162. His-187 (proton acceptor) is an active-site residue.

It belongs to the LDH/MDH superfamily. MDH type 2 family.

The catalysed reaction is (S)-malate + NAD(+) = oxaloacetate + NADH + H(+). Functionally, catalyzes the reversible oxidation of malate to oxaloacetate. The sequence is that of Malate dehydrogenase from Paenarthrobacter aurescens (strain TC1).